Consider the following 631-residue polypeptide: Probable protein phosphatase 2C 31 (631 aa).

Disordered stretches follow at residues 119–142 (GPLH…SDRF) and 205–231 (LSGR…PKGN). Residues 131 to 140 (ASGSASTASD) show a composition bias toward polar residues. Positions 221 to 622 (DGDYRSTPKG…DDVSIIVMSF (402 aa)) constitute a PPM-type phosphatase domain. 2 residues coordinate Mn(2+): aspartate 261 and glycine 262. The interval 324–347 (GGDDDPDAERKAKRGRIERNADDD) is disordered. Mn(2+) is bound by residues aspartate 550 and aspartate 613.

It belongs to the PP2C family. Mg(2+) serves as cofactor. Mn(2+) is required as a cofactor.

The catalysed reaction is O-phospho-L-seryl-[protein] + H2O = L-seryl-[protein] + phosphate. The enzyme catalyses O-phospho-L-threonyl-[protein] + H2O = L-threonyl-[protein] + phosphate. The chain is Probable protein phosphatase 2C 31 from Oryza sativa subsp. japonica (Rice).